Consider the following 216-residue polypeptide: Nicotinamidase (216 aa).

Asp8 is an active-site residue. Residues Asp51, His53, and His94 each coordinate Zn(2+). Lys122 is a catalytic residue. Cys167 functions as the Nucleophile in the catalytic mechanism.

This sequence belongs to the isochorismatase family.

The protein resides in the cytoplasm. The protein localises to the nucleus. Its subcellular location is the peroxisome. It catalyses the reaction nicotinamide + H2O = nicotinate + NH4(+). It participates in cofactor biosynthesis; nicotinate biosynthesis; nicotinate from nicotinamide: step 1/1. Its activity is regulated as follows. Inhibited by N-ethylmaleimide, HgCl(2) and PCMB. Competitively inhibited by NAD, NMN and 3-acetylpyridine. Catalyzes the deamidation of nicotinamide, an early step in the NAD(+) salvage pathway. Positively regulates SIR2-mediated silencing and longevity by preventing the accumulation of intracellular nicotinamide, an inhibitor of SIR2, during times of stress. Also acts on nicotinyl hydroxamate. This Saccharomyces cerevisiae (strain ATCC 204508 / S288c) (Baker's yeast) protein is Nicotinamidase (PNC1).